The following is a 369-amino-acid chain: MPDSRDLQLSSYDYVLPEDRIAQAPVEPRHDARLLVVPPAERSLSELRHQRVWDWQQELQPGDLLVVNDTRVLKARLRVRRSGGGLGELLVLEPRGEGRWLCLARPAKRMRPGDQLWLEALEQEPLSLAVLANDAASGGRIVQFPPDCVDALSLEGLLERYGEVPLPPYITRHDSSDQERYQTRYATRPGAVAAPTAGLHLSDALLAAIAERGVALAHVTLHVGLGTFRPVETEDLSDLTLHSEWVEVRAEVVEAVLACRARGGRVIAVGTTSVRALEAAAAGGGGLQPLKGPVDLVIQPGYRFQVVQGLLTNFHLPKSSLLLLVSALIGRDQLLQIYNAAIEEMYRFYSYGDAMWIAPEAVLFDARPE.

The protein belongs to the QueA family. Monomer.

The protein resides in the cytoplasm. It carries out the reaction 7-aminomethyl-7-carbaguanosine(34) in tRNA + S-adenosyl-L-methionine = epoxyqueuosine(34) in tRNA + adenine + L-methionine + 2 H(+). It functions in the pathway tRNA modification; tRNA-queuosine biosynthesis. Transfers and isomerizes the ribose moiety from AdoMet to the 7-aminomethyl group of 7-deazaguanine (preQ1-tRNA) to give epoxyqueuosine (oQ-tRNA). This chain is S-adenosylmethionine:tRNA ribosyltransferase-isomerase, found in Synechococcus sp. (strain CC9311).